Consider the following 100-residue polypeptide: Urease subunit gamma (100 aa).

Belongs to the urease gamma subunit family. As to quaternary structure, heterotrimer of UreA (gamma), UreB (beta) and UreC (alpha) subunits. Three heterotrimers associate to form the active enzyme.

The protein localises to the cytoplasm. It catalyses the reaction urea + 2 H2O + H(+) = hydrogencarbonate + 2 NH4(+). It participates in nitrogen metabolism; urea degradation; CO(2) and NH(3) from urea (urease route): step 1/1. The chain is Urease subunit gamma from Halalkalibacterium halodurans (strain ATCC BAA-125 / DSM 18197 / FERM 7344 / JCM 9153 / C-125) (Bacillus halodurans).